A 311-amino-acid chain; its full sequence is Phospholipid phosphatase 3 (311 aa).

Over 1–33 (MQNYKYDKAIVPESKNGGSPALNNNPRRSGSKR) the chain is Cytoplasmic. Position 19 is a phosphoserine (Ser-19). A helical transmembrane segment spans residues 34–54 (VLLICLDLFCLFMAGLPFLII). The Extracellular segment spans residues 55–85 (ETSTIKPYHRGFYCNDESIKYPLKTGETIND). Residues 86–106 (AVLCAVGIVIAILAIITGEFY) traverse the membrane as a helical segment. The Cytoplasmic segment spans residues 107–122 (RIYYLKKSRSTIQNPY). The short motif at 109–110 (YY) is the Dityrosine basolateral targeting motif element. A helical membrane pass occupies residues 123 to 143 (VAALYKQVGCFLFGCAISQSF). Residues 144 to 193 (TDIAKVSIGRLRPHFLSVCNPDFSQINCSEGYIQNYRCRGDDSKVQEARK) are Extracellular-facing. Positions 148–156 (KVSIGRLRP) are phosphatase sequence motif I. An N-linked (GlcNAc...) asparagine glycan is attached at Asn-170. The Integrin-binding motif motif lies at 182–184 (RGD). Residues 194-214 (SFFSGHASFSMYTMLYLVLYL) form a helical membrane-spanning segment. The interval 196–199 (FSGH) is phosphatase sequence motif II. His-199 functions as the Proton donors in the catalytic mechanism. Topologically, residues 215–225 (QARFTWRGARL) are cytoplasmic. A helical transmembrane segment spans residues 226–243 (LRPLLQFTLIMMAFYTGL). Positions 244–255 (SRVSDHKHHPSD) are phosphatase sequence motif III. Topologically, residues 244–257 (SRVSDHKHHPSDVL) are extracellular. The active-site Nucleophile is His-251. The helical transmembrane segment at 258–278 (AGFAQGALVACCIVFFVSDLF) threads the bilayer. A mediates interaction with CTNND1 region spans residues 275–311 (SDLFKTKTTLSLPAPAIRKEILSPVDIIDRNNHHNMM). Topologically, residues 279–311 (KTKTTLSLPAPAIRKEILSPVDIIDRNNHHNMM) are cytoplasmic.

This sequence belongs to the PA-phosphatase related phosphoesterase family. As to quaternary structure, forms functional homodimers and homooligomers that are not required for substrate recognition and catalytic activity. Can also form heterooligomers with other PLPP2 and PLPP3. Interacts with CTNND1; negatively regulates the PLPP3-mediated stabilization of beta-catenin/CTNNB1. In terms of processing, N-glycosylated. Contains high-mannose oligosaccharides. As to expression, ubiquitously expressed. Highly expressed in heart and placenta.

It localises to the cell membrane. The protein resides in the basolateral cell membrane. Its subcellular location is the endoplasmic reticulum membrane. The protein localises to the endoplasmic reticulum-Golgi intermediate compartment membrane. It is found in the golgi apparatus membrane. It localises to the golgi apparatus. The protein resides in the trans-Golgi network membrane. Its subcellular location is the membrane raft. It catalyses the reaction a 1,2-diacyl-sn-glycero-3-phosphate + H2O = a 1,2-diacyl-sn-glycerol + phosphate. The catalysed reaction is 1,2-dihexadecanoyl-sn-glycero-3-phosphate + H2O = 1,2-dihexadecanoyl-sn-glycerol + phosphate. The enzyme catalyses 1,2-di-(9Z-octadecenoyl)-sn-glycero-3-phosphate + H2O = 1,2-di-(9Z-octadecenoyl)-sn-glycerol + phosphate. It carries out the reaction a monoacyl-sn-glycero-3-phosphate + H2O = a monoacylglycerol + phosphate. It catalyses the reaction (9Z)-octadecenoyl-sn-glycero-3-phosphate + H2O = (9Z-octadecenoyl)-glycerol + phosphate. The catalysed reaction is sphing-4-enine 1-phosphate + H2O = sphing-4-enine + phosphate. The enzyme catalyses an N-acylsphing-4-enine 1-phosphate + H2O = an N-acylsphing-4-enine + phosphate. It carries out the reaction N-(octanoyl)-sphing-4-enine-1-phosphate + H2O = N-octanoylsphing-4-enine + phosphate. It catalyses the reaction N-(9Z-octadecenoyl)-ethanolamine phosphate + H2O = N-(9Z-octadecenoyl) ethanolamine + phosphate. The protein operates within lipid metabolism; phospholipid metabolism. Its activity is regulated as follows. Magnesium-independent phospholipid phosphatase. Insensitive to N-ethylmaleimide. Inhibited by sphingosine, zinc ions and modestly by propanolol. Functionally, magnesium-independent phospholipid phosphatase of the plasma membrane that catalyzes the dephosphorylation of a variety of glycerolipid and sphingolipid phosphate esters including phosphatidate/PA, lysophosphatidate/LPA, diacylglycerol pyrophosphate/DGPP, sphingosine 1-phosphate/S1P and ceramide 1-phosphate/C1P. Also acts on N-oleoyl ethanolamine phosphate/N-(9Z-octadecenoyl)-ethanolamine phosphate, a potential physiological compound. Has both an extracellular and an intracellular phosphatase activity, allowing the hydrolysis and the cellular uptake of these bioactive lipid mediators from the milieu, regulating signal transduction in different cellular processes. Through the dephosphorylation of extracellular sphingosine-1-phosphate and the regulation of its extra- and intracellular availability, plays a role in vascular homeostasis, regulating endothelial cell migration, adhesion, survival, proliferation and the production of pro-inflammatory cytokines. By maintaining the appropriate levels of this lipid in the cerebellum, also ensure its proper development and function. Through its intracellular lipid phosphatase activity may act in early compartments of the secretory pathway, regulating the formation of Golgi to endoplasmic reticulum retrograde transport carriers. Its function is as follows. Independently of this phosphatase activity may also function in the Wnt signaling pathway and the stabilization of beta-catenin/CTNNB1, thereby regulating cell proliferation, migration and differentiation in angiogenesis or yet in tumor growth. Also plays a role in integrin-mediated cell-cell adhesion in angiogenesis. In Homo sapiens (Human), this protein is Phospholipid phosphatase 3.